A 470-amino-acid chain; its full sequence is Leucine-rich repeat extensin-like protein 6 (470 aa).

Residues 1–28 (MREDTFFFQWWFLVSGLSFIFLLPQAFT) form the signal peptide. A glycan (N-linked (GlcNAc...) asparagine) is linked at Asn83. LRR repeat units follow at residues 98–122 (VLTV…LGLL), 123–146 (TDLA…LKCL), 147–170 (HLLH…IFSL), 171–194 (PSLK…LFDL), 196–217 (LDAL…IGNS), 219–241 (VSVL…FYKM), 243–265 (KTLH…EIGL), 266–290 (LNQL…IGDM), 291–314 (KSLE…ICRL), and 316–337 (RLEN…CLRL). N-linked (GlcNAc...) asparagine glycosylation is present at Asn319. The segment at 378-411 (SPPPPPPPPPPPPPPPPPPPPPPPPPPPPPYVYP) is disordered. Residues 378-470 (SPPPPPPPPP…CNDLPTPVHY (93 aa)) form a contains the Ser-Pro(4) repeats region.

Post-translationally, hydroxylated on proline residues in the S-P-P-P-P repeat. O-glycosylated on hydroxyprolines. In terms of tissue distribution, expressed in roots.

The protein localises to the secreted. Its subcellular location is the cell wall. Its function is as follows. Modulates cell morphogenesis by regulating cell wall formation and assembly, and/or growth polarization. The chain is Leucine-rich repeat extensin-like protein 6 (LRX6) from Arabidopsis thaliana (Mouse-ear cress).